A 367-amino-acid polypeptide reads, in one-letter code: MEAVRSTTTLSNFHLLNILVLRSLKPLHRLSFSFSASAMESDASCSLVLCGKSSVETEVAKGLKNKNSLKLPDNTKVSLILESEAKNLVKDDDNSFNLSLFMNSIITHRFGRFLIWSPRLSSTHDVVSHNFSELPVGSVCVTDIQFKGRGRTKNVWESPKGCLMYSFTLEMEDGRVVPLIQYVVSLAVTEAVKDVCDKKGLPYIDVKIKWPNDLYVNGLKVGGILCTSTYRSKKFNVSVGVGLNVDNGQPTTCLNAVLKGMAPESNLLKREEILGAFFHKFEKFFDLFMDQGFKSLEELYYRTWLHSEQRVIVEDKVEDQVVQNVVTIQGLTSSGYLLAVGDDNQMYELHPDGNSFDFFKGLVRRKI.

The N-terminal 37 residues, 1-37, are a transit peptide targeting the chloroplast; that stretch reads MEAVRSTTTLSNFHLLNILVLRSLKPLHRLSFSFSAS. The BPL/LPL catalytic domain occupies 105-289; that stretch reads IITHRFGRFL…KFEKFFDLFM (185 aa). Biotin is bound by residues 122-124, Gln145, 149-151, and Lys220; these read STH and RGR.

It belongs to the biotin--protein ligase family. As to expression, expressed in roots, leaves, stems, flowers, siliques and seeds.

Its subcellular location is the plastid. The protein resides in the chloroplast. It localises to the cytoplasm. The protein localises to the cytosol. The catalysed reaction is apo-[3-methylcrotonoyl-CoA:carbon-dioxide ligase (ADP-forming)] + biotin + ATP = holo-[3-methylcrotonoyl-CoA:carbon-dioxide ligase (ADP-forming)] + AMP + diphosphate + H(+). It catalyses the reaction biotin + L-lysyl-[protein] + ATP = N(6)-biotinyl-L-lysyl-[protein] + AMP + diphosphate + H(+). Its function is as follows. Plays a major role in biotin-dependent carboxylase biotinylation. Catalyzes the addition of biotin to the biotin carboxyl carrier protein (BCCP) subunit of acetyl-CoA carboxylase. Can also biotinylate methylcrotonyl-CoA carboxylase. Is responsible for most, if not all, biotin--protein ligase activity in Arabidopsis. Is essential for plant viability and required for ovule development. This is Biotin--protein ligase 1, chloroplastic from Arabidopsis thaliana (Mouse-ear cress).